The chain runs to 394 residues: MNKKSIRDVDLKGKRVFCRVDFNVPMKEGKITDETRIRAALPTIQYLIEQGAKVILASHLGRPKGQAVEELRLTPVAARLGELLGKDVKKADEAFGPVAQEMVAAMNEGDVLVLENVRFYAGEEKNDAELAKEFAALADIFVNDAFGAAHRAHASTAGIADYLPAVSGLLMEKELDVLGKALSNPERPFTAIIGGAKVKDKIGVIRHLLDKVDNLIIGGGLAYTFVKALGHEIGLSLCENDKIELAKEFMQLAKEKGVNFYMPVDVVITEEFSETATTQIVGIDSIPSTWEGVDIGPKTREIYADVIKNSKLVVWNGPMGVFEMTPFAEGTKAVGQALADAEDTYSVIGGGDSAAAVEKFGMADKMSHISTGGGASLEFMEGKELPGVVCLNDK.

Substrate contacts are provided by residues 21–23 (DFN), Arg36, 59–62 (HLGR), Arg118, and Arg151. Ser183 is modified (phosphoserine). Residues Lys201 and Gly292 each coordinate ATP. Position 299 is a phosphothreonine (Thr299). ATP contacts are provided by residues Glu323 and 350–353 (GGDS).

This sequence belongs to the phosphoglycerate kinase family. In terms of assembly, monomer.

It is found in the cytoplasm. The catalysed reaction is (2R)-3-phosphoglycerate + ATP = (2R)-3-phospho-glyceroyl phosphate + ADP. It participates in carbohydrate degradation; glycolysis; pyruvate from D-glyceraldehyde 3-phosphate: step 2/5. This Bacillus mycoides (strain KBAB4) (Bacillus weihenstephanensis) protein is Phosphoglycerate kinase.